The sequence spans 312 residues: Pyrimidine-specific ribonucleoside hydrolase RihA (312 aa).

H240 is an active-site residue.

This sequence belongs to the IUNH family. RihA subfamily.

In terms of biological role, hydrolyzes cytidine or uridine to ribose and cytosine or uracil, respectively. The polypeptide is Pyrimidine-specific ribonucleoside hydrolase RihA (Citrobacter koseri (strain ATCC BAA-895 / CDC 4225-83 / SGSC4696)).